Here is a 178-residue protein sequence, read N- to C-terminus: Large ribosomal subunit protein uL6 (178 aa).

This sequence belongs to the universal ribosomal protein uL6 family. In terms of assembly, part of the 50S ribosomal subunit.

Its function is as follows. This protein binds to the 23S rRNA, and is important in its secondary structure. It is located near the subunit interface in the base of the L7/L12 stalk, and near the tRNA binding site of the peptidyltransferase center. This is Large ribosomal subunit protein uL6 from Arthrobacter sp. (strain FB24).